The following is a 132-amino-acid chain: Galectin-2 (132 aa).

Residues 4-131 enclose the Galectin domain; the sequence is ELEVKNMDMK…GFNMSSFKLK (128 aa). Residue 65–71 participates in a beta-D-galactoside binding; the sequence is WGQEQRE.

In terms of assembly, homodimer.

Its function is as follows. This protein binds beta-galactoside. Its physiological function is not yet known. This chain is Galectin-2 (LGALS2), found in Homo sapiens (Human).